We begin with the raw amino-acid sequence, 421 residues long: L-evernosamine nitrososynthase (421 aa).

Belongs to the acyl-CoA dehydrogenase family. As to quaternary structure, homotetramer. Requires FAD as cofactor.

The catalysed reaction is dTDP-beta-L-evernosamine + 2 NADPH + 2 O2 + H(+) = dTDP-2,3,6-trideoxy-3-C-methyl-4-O-methyl-3-nitroso-beta-L-arabino-hexopyranose + 2 NADP(+) + 3 H2O. It carries out the reaction dTDP-beta-L-evernosamine + NADPH + O2 = dTDP-N-hydroxy-beta-L-evernosamine + NADP(+) + H2O. It catalyses the reaction dTDP-N-hydroxy-beta-L-evernosamine + NADPH + O2 + H(+) = dTDP-2,3,6-trideoxy-3-C-methyl-4-O-methyl-3-nitroso-beta-L-arabino-hexopyranose + NADP(+) + 2 H2O. Its pathway is antibiotic biosynthesis. In terms of biological role, nitrososynthase involved in the biosynthesis of everninomicin, a broad spectrum orthosomycin antibiotic. Catalyzes the double-oxidation of TDP-L-evernosamine to TDP-L-evernitrosose. The enzyme first oxidizes the substrate to a transient hydroxylamino intermediate, which is then further oxidized to nitroso sugar. The nitroso group is probably spontaneously oxidized giving TDP-L-evernitrose. In vitro, catalyzes the double-oxidation of TDP-L-epi-vancosamine to TDP-L-epi-vancosonitrose. Can also use biosynthetic progenitors of TDP-L-epi-vancosamine, but progenitors solely undergo single-oxidation reactions and terminate in the hydroxylamine oxidation state. In Micromonospora sp. (strain ATCC 39149 / NRRL 15099 / SCC 1413), this protein is L-evernosamine nitrososynthase.